Here is a 274-residue protein sequence, read N- to C-terminus: tRNA (guanine-N(7)-)-methyltransferase (274 aa).

The interval 16–40 (ASASRGAATGSRGVAPAVPRGGAPA) is disordered. The S-adenosyl-L-methionine site is built by Glu-106, Glu-131, Asp-158, and Asp-181. Residue Asp-181 is part of the active site. Substrate-binding positions include Lys-185, Asp-217, and 252-255 (TKFE).

It belongs to the class I-like SAM-binding methyltransferase superfamily. TrmB family.

It carries out the reaction guanosine(46) in tRNA + S-adenosyl-L-methionine = N(7)-methylguanosine(46) in tRNA + S-adenosyl-L-homocysteine. It functions in the pathway tRNA modification; N(7)-methylguanine-tRNA biosynthesis. Its function is as follows. Catalyzes the formation of N(7)-methylguanine at position 46 (m7G46) in tRNA. The protein is tRNA (guanine-N(7)-)-methyltransferase of Verminephrobacter eiseniae (strain EF01-2).